The following is an 880-amino-acid chain: Leucine--tRNA ligase (880 aa).

Positions 49–59 match the 'HIGH' region motif; the sequence is PYPSGRIHMGH. The short motif at 638–642 is the 'KMSKS' region element; that stretch reads KMSKS. ATP is bound at residue Lys-641.

It belongs to the class-I aminoacyl-tRNA synthetase family.

The protein resides in the cytoplasm. The catalysed reaction is tRNA(Leu) + L-leucine + ATP = L-leucyl-tRNA(Leu) + AMP + diphosphate. The sequence is that of Leucine--tRNA ligase from Bartonella quintana (strain Toulouse) (Rochalimaea quintana).